The primary structure comprises 190 residues: Adenylate kinase (190 aa).

Residue 12–17 coordinates ATP; the sequence is GSGKTT. The interval 33 to 62 is NMP; it reads STGDLLRAEVASGSELGKTIDSFISKGNLV. Residues Thr-34, Arg-39, 60 to 62, 87 to 90, and Gln-94 contribute to the AMP site; these read NLV and GYPR. The LID stretch occupies residues 129–135; it reads GRARGAD. Arg-130 provides a ligand contact to ATP. Positions 132 and 144 each coordinate AMP. Residue Arg-172 coordinates ATP.

This sequence belongs to the adenylate kinase family. In terms of assembly, monomer.

It localises to the cytoplasm. It catalyses the reaction AMP + ATP = 2 ADP. It functions in the pathway purine metabolism; AMP biosynthesis via salvage pathway; AMP from ADP: step 1/1. In terms of biological role, catalyzes the reversible transfer of the terminal phosphate group between ATP and AMP. Plays an important role in cellular energy homeostasis and in adenine nucleotide metabolism. This Campylobacter lari (strain RM2100 / D67 / ATCC BAA-1060) protein is Adenylate kinase.